We begin with the raw amino-acid sequence, 359 residues long: 3-dehydroquinate synthase (359 aa).

NAD(+) is bound by residues Asp-71–Lys-76, Gly-105–Asp-109, Thr-129–Thr-130, Lys-142, Lys-151, and Cys-169–Thr-172. Zn(2+) contacts are provided by Glu-184, His-247, and His-264.

The protein belongs to the sugar phosphate cyclases superfamily. Dehydroquinate synthase family. It depends on Co(2+) as a cofactor. The cofactor is Zn(2+). Requires NAD(+) as cofactor.

It is found in the cytoplasm. It catalyses the reaction 7-phospho-2-dehydro-3-deoxy-D-arabino-heptonate = 3-dehydroquinate + phosphate. It functions in the pathway metabolic intermediate biosynthesis; chorismate biosynthesis; chorismate from D-erythrose 4-phosphate and phosphoenolpyruvate: step 2/7. Catalyzes the conversion of 3-deoxy-D-arabino-heptulosonate 7-phosphate (DAHP) to dehydroquinate (DHQ). The protein is 3-dehydroquinate synthase of Baumannia cicadellinicola subsp. Homalodisca coagulata.